A 129-amino-acid polypeptide reads, in one-letter code: UPF0102 protein CPS_4433 (129 aa).

It belongs to the UPF0102 family.

This is UPF0102 protein CPS_4433 from Colwellia psychrerythraea (strain 34H / ATCC BAA-681) (Vibrio psychroerythus).